A 488-amino-acid chain; its full sequence is MSQSVESRTRIKSERYESGVIPYAKMGYWDADYVIKETDILALFRITPQPGVDPIEASAAIAGESSTATWTVVWTDLLTACDLYRAKAYRVDPVPNVADQYFAYIAYDIDLFEEGSIANLTASIIGNVFGFKAVKALRLEDMRMPVAYLKTFQGPATGLIVERERMDKFGRPFLGATVKPKLGLSGKNYGRVVYEGLKGGLDFLKDDENINSQPFMRWRERFLYSMEGVNKASAAAGEIKGHYLNVTAATMEDMYERAEFSKVVGSIICMIDLVIGYTAIQSMAIWARKNDMILHLHRAGNSTYSRQKNHGMNFRVICKWMRMAGVDHIHAGTVVGKLEGDPLMIKGFYNTLLAGETEINLPQGLFFAQNWASLRKVVPVASGGIHAGQMHQLLDYLGDDVVLQFGGGTIGHPDGIQAGATANRVALESMVMARNEGRDFVAEGPQILRDAAKTCGPLQTALDLWKDISFNYTSTDTADFVETPTANV.

Positions 127 and 177 each coordinate substrate. Lys-179 (proton acceptor) is an active-site residue. A substrate-binding site is contributed by Lys-181. Positions 205, 207, and 208 each coordinate Mg(2+). Lys-205 carries the N6-carboxylysine modification. His-297 functions as the Proton acceptor in the catalytic mechanism. Substrate is bound by residues Arg-298, His-330, and Ser-382.

It belongs to the RuBisCO large chain family. Type I subfamily. As to quaternary structure, heterohexadecamer of 8 large chains and 8 small chains. The cofactor is Mg(2+).

Its subcellular location is the plastid. It localises to the chloroplast. It catalyses the reaction 2 (2R)-3-phosphoglycerate + 2 H(+) = D-ribulose 1,5-bisphosphate + CO2 + H2O. The catalysed reaction is D-ribulose 1,5-bisphosphate + O2 = 2-phosphoglycolate + (2R)-3-phosphoglycerate + 2 H(+). Functionally, ruBisCO catalyzes two reactions: the carboxylation of D-ribulose 1,5-bisphosphate, the primary event in carbon dioxide fixation, as well as the oxidative fragmentation of the pentose substrate in the photorespiration process. Both reactions occur simultaneously and in competition at the same active site. The polypeptide is Ribulose bisphosphate carboxylase large chain (Porphyra purpurea (Red seaweed)).